We begin with the raw amino-acid sequence, 350 residues long: Secreted effector protein PipB2 (350 aa).

Pentapeptide repeat domains lie at 162–201, 202–241, 247–286, and 287–326; these read ANLT…NLSG, TSLG…SLLG, CNCS…IMED, and AVLT…TLTH.

Interacts with the host kinesin light chain (KLC), a subunit of the kinesin-1 motor complex.

Its subcellular location is the secreted. The protein resides in the host membrane. In terms of biological role, effector proteins function to alter host cell physiology and promote bacterial survival in host tissues. Involved in the reorganization of late endosome/lysosome (LE/Lys) compartments in mammalian cells. Necessary and sufficient to link kinesin-1 onto the Salmonella-containing vacuole (SCV) membrane. Required for centrifugal extension of lysosomal glycoprotein-rich membrane tubules, known as Salmonella-induced filaments (Sifs), away from the SCV and toward the cell periphery. Required for virulence, but not for intracellular survival and replication in phagocytic cells. The protein is Secreted effector protein PipB2 (pipB2) of Salmonella paratyphi A (strain ATCC 9150 / SARB42).